The sequence spans 456 residues: Argininosuccinate lyase (456 aa).

Belongs to the lyase 1 family. Argininosuccinate lyase subfamily.

Its subcellular location is the cytoplasm. It carries out the reaction 2-(N(omega)-L-arginino)succinate = fumarate + L-arginine. The protein operates within amino-acid biosynthesis; L-arginine biosynthesis; L-arginine from L-ornithine and carbamoyl phosphate: step 3/3. In Shewanella pealeana (strain ATCC 700345 / ANG-SQ1), this protein is Argininosuccinate lyase.